Reading from the N-terminus, the 239-residue chain is MDKRILVRLAIYPIAYVLWGGLMWYSQIITPLDVTNLLLKLPLCNKEFYIFLQSLPNIVIEFFKIIYLYGFSSMIIGGIAYYLFIKRDFLKSDIILIDLALGWLFAGLIYTFVVVKSPFQVGVAKDLINMHYFWIFTKPTYEIPSLHTAYSFLLALHFKDEKPLNYIYFALAILIPISTLIMGMHWIVDVITGVLYGYIIYKFPKTIHIKISKALDFLAGHIKPCILCGKCKERETHEK.

4 consecutive transmembrane segments (helical) span residues 9 to 29, 65 to 85, 94 to 114, and 167 to 187; these read LAIY…SQII, IIYL…YLFI, IILI…TFVV, and IYFA…MHWI.

The protein resides in the cell membrane. This is an uncharacterized protein from Methanocaldococcus jannaschii (strain ATCC 43067 / DSM 2661 / JAL-1 / JCM 10045 / NBRC 100440) (Methanococcus jannaschii).